The following is a 664-amino-acid chain: DNA mismatch repair protein MutL (664 aa).

A disordered region spans residues 382–447 (RKAGQEQQLQ…YGEPAPSKQQ (66 aa)). Over residues 427–436 (RHTTSSNQSE) the composition is skewed to polar residues.

This sequence belongs to the DNA mismatch repair MutL/HexB family.

Its function is as follows. This protein is involved in the repair of mismatches in DNA. It is required for dam-dependent methyl-directed DNA mismatch repair. May act as a 'molecular matchmaker', a protein that promotes the formation of a stable complex between two or more DNA-binding proteins in an ATP-dependent manner without itself being part of a final effector complex. The protein is DNA mismatch repair protein MutL of Vibrio vulnificus (strain CMCP6).